The chain runs to 397 residues: Chorismate synthase (397 aa).

NADP(+) contacts are provided by arginine 40 and arginine 46. FMN is bound by residues arginine 129 to serine 131, glutamine 257 to alanine 258, glycine 302, lysine 317 to serine 321, and arginine 343.

Belongs to the chorismate synthase family. Homotetramer. The cofactor is FMNH2.

The enzyme catalyses 5-O-(1-carboxyvinyl)-3-phosphoshikimate = chorismate + phosphate. It participates in metabolic intermediate biosynthesis; chorismate biosynthesis; chorismate from D-erythrose 4-phosphate and phosphoenolpyruvate: step 7/7. In terms of biological role, catalyzes the anti-1,4-elimination of the C-3 phosphate and the C-6 proR hydrogen from 5-enolpyruvylshikimate-3-phosphate (EPSP) to yield chorismate, which is the branch point compound that serves as the starting substrate for the three terminal pathways of aromatic amino acid biosynthesis. This reaction introduces a second double bond into the aromatic ring system. This chain is Chorismate synthase, found in Chlorobaculum tepidum (strain ATCC 49652 / DSM 12025 / NBRC 103806 / TLS) (Chlorobium tepidum).